The sequence spans 121 residues: Small ribosomal subunit protein uS13 (121 aa).

Residues 94–121 form a disordered region; that stretch reads GLPVRGQNTKNNARTRKGPRRTVANKKK. The segment covering 106-121 has biased composition (basic residues); that stretch reads ARTRKGPRRTVANKKK.

It belongs to the universal ribosomal protein uS13 family. Part of the 30S ribosomal subunit. Forms a loose heterodimer with protein S19. Forms two bridges to the 50S subunit in the 70S ribosome.

Located at the top of the head of the 30S subunit, it contacts several helices of the 16S rRNA. In the 70S ribosome it contacts the 23S rRNA (bridge B1a) and protein L5 of the 50S subunit (bridge B1b), connecting the 2 subunits; these bridges are implicated in subunit movement. Contacts the tRNAs in the A and P-sites. This is Small ribosomal subunit protein uS13 from Geobacillus sp. (strain WCH70).